Consider the following 295-residue polypeptide: 4-hydroxy-tetrahydrodipicolinate synthase (295 aa).

T46 contributes to the pyruvate binding site. Y134 serves as the catalytic Proton donor/acceptor. Catalysis depends on K162, which acts as the Schiff-base intermediate with substrate. V204 provides a ligand contact to pyruvate.

The protein belongs to the DapA family. Homotetramer; dimer of dimers.

The protein resides in the cytoplasm. It catalyses the reaction L-aspartate 4-semialdehyde + pyruvate = (2S,4S)-4-hydroxy-2,3,4,5-tetrahydrodipicolinate + H2O + H(+). It participates in amino-acid biosynthesis; L-lysine biosynthesis via DAP pathway; (S)-tetrahydrodipicolinate from L-aspartate: step 3/4. Catalyzes the condensation of (S)-aspartate-beta-semialdehyde [(S)-ASA] and pyruvate to 4-hydroxy-tetrahydrodipicolinate (HTPA). This Oceanobacillus iheyensis (strain DSM 14371 / CIP 107618 / JCM 11309 / KCTC 3954 / HTE831) protein is 4-hydroxy-tetrahydrodipicolinate synthase.